A 115-amino-acid chain; its full sequence is T cell receptor beta variable 2 (115 aa).

An N-terminal signal peptide occupies residues 1 to 19 (MDTWLVCWAIFSLLKAGLT). The region spanning 21-115 (PEVTQTPSHQ…SAMYFCASSE (95 aa)) is the Ig-like domain. Cys42 and Cys111 form a disulfide bridge. The N-linked (GlcNAc...) asparagine glycan is linked to Asn93.

As to quaternary structure, alpha-beta TR is a heterodimer composed of an alpha and beta chain; disulfide-linked. The alpha-beta TR is associated with the transmembrane signaling CD3 coreceptor proteins to form the TR-CD3 (TcR or TCR). The assembly of alpha-beta TR heterodimers with CD3 occurs in the endoplasmic reticulum where a single alpha-beta TR heterodimer associates with one CD3D-CD3E heterodimer, one CD3G-CD3E heterodimer and one CD247 homodimer forming a stable octameric structure. CD3D-CD3E and CD3G-CD3E heterodimers preferentially associate with TR alpha and TR beta chains, respectively. The association of the CD247 homodimer is the last step of TcR assembly in the endoplasmic reticulum and is required for transport to the cell surface.

It is found in the cell membrane. In terms of biological role, v region of the variable domain of T cell receptor (TR) beta chain that participates in the antigen recognition. Alpha-beta T cell receptors are antigen specific receptors which are essential to the immune response and are present on the cell surface of T lymphocytes. Recognize peptide-major histocompatibility (MH) (pMH) complexes that are displayed by antigen presenting cells (APC), a prerequisite for efficient T cell adaptive immunity against pathogens. Binding of alpha-beta TR to pMH complex initiates TR-CD3 clustering on the cell surface and intracellular activation of LCK that phosphorylates the ITAM motifs of CD3G, CD3D, CD3E and CD247 enabling the recruitment of ZAP70. In turn ZAP70 phosphorylates LAT, which recruits numerous signaling molecules to form the LAT signalosome. The LAT signalosome propagates signal branching to three major signaling pathways, the calcium, the mitogen-activated protein kinase (MAPK) kinase and the nuclear factor NF-kappa-B (NF-kB) pathways, leading to the mobilization of transcription factors that are critical for gene expression and essential for T cell growth and differentiation. The T cell repertoire is generated in the thymus, by V-(D)-J rearrangement. This repertoire is then shaped by intrathymic selection events to generate a peripheral T cell pool of self-MH restricted, non-autoaggressive T cells. Post-thymic interaction of alpha-beta TR with the pMH complexes shapes TR structural and functional avidity. The sequence is that of T cell receptor beta variable 2 from Homo sapiens (Human).